A 2359-amino-acid polypeptide reads, in one-letter code: Nonribosomal peptide synthetase anaPS (2359 aa).

An adenylation 1 region spans residues 239-633 (RNATVHGDTL…VRRKDNQVKI (395 aa)). Residues 770–846 (AAQGKGEEAI…ELASAANLSN (77 aa)) enclose the Carrier 1 domain. Ser807 is subject to O-(pantetheine 4'-phosphoryl)serine. A condensation 1 region spans residues 883–1292 (EDIYPSTALQ…VGDLPRMSRQ (410 aa)). Residues 1321 to 1709 (LEYPNACAVS…GRKDSQIKIR (389 aa)) form an adenylation 2 region. The 77-residue stretch at 1842–1918 (APSNSVEQDL…AIANKIGVVS (77 aa)) folds into the Carrier 2 domain. Ser1879 is modified (O-(pantetheine 4'-phosphoryl)serine). A condensation 2 region spans residues 1936–2356 (LTPIQEFFFE…LVKCLEDLAS (421 aa)).

Belongs to the NRP synthetase family.

The catalysed reaction is anthranilate + L-tryptophan + 2 ATP = (R)-benzodiazepinedione + 2 AMP + 2 diphosphate + H(+). It participates in alkaloid biosynthesis. Nonribosomal peptide synthetase; part of the gene cluster that mediates the biosynthesis of the prenylated pyrroloindoline diketopiperazine acetylaszonalenin. The first step in the pathway is the formation of (R)-benzodiazepinedione by condensation of tryptophan and anthranilic acid catalyzed by the non-ribosomal peptide synthetase anaPS. The prenyltransferase anaPT then converts (R)-benzodiazepinedione to aszonalenin in the presence of dimethylallyl diphosphate (DMAPP) via C3-prenylation. The last step in the biosynthesis of acetylaszonalenin via acetylation of aszonalenin at position N1 catalyzed by anaAT. The chain is Nonribosomal peptide synthetase anaPS from Neosartorya fischeri (strain ATCC 1020 / DSM 3700 / CBS 544.65 / FGSC A1164 / JCM 1740 / NRRL 181 / WB 181) (Aspergillus fischerianus).